The sequence spans 558 residues: Polypeptide N-acetylgalactosaminyltransferase 16 (558 aa).

The Cytoplasmic portion of the chain corresponds to 1–6 (MRKIRA). Residues 7-26 (NAIAILTVAWILGTFYYLWQ) form a helical; Signal-anchor for type II membrane protein membrane-spanning segment. Topologically, residues 27-558 (DNRAHAASSG…AQQWQLLPHT (532 aa)) are lumenal. Residues 33 to 54 (ASSGGRGAQRAGRRSEQLREDR) form a disordered region. Over residues 45–54 (RRSEQLREDR) the composition is skewed to basic and acidic residues. Intrachain disulfides connect cysteine 113/cysteine 340, cysteine 331/cysteine 409, cysteine 441/cysteine 460, cysteine 486/cysteine 506, and cysteine 530/cysteine 543. Residues 122–227 (LPATSVIITF…TEWLPPMLQR (106 aa)) are catalytic subdomain A. Substrate contacts are provided by aspartate 163 and arginine 188. Aspartate 211 is a Mn(2+) binding site. Serine 212 contacts substrate. Residue histidine 213 participates in Mn(2+) binding. Residues 286–348 (PIRTPVIAGG…PCSRVGHVFR (63 aa)) are catalytic subdomain B. Tryptophan 317 contributes to the substrate binding site. Histidine 345 serves as a coordination point for Mn(2+). Substrate-binding residues include arginine 348, histidine 351, and tyrosine 353. The Ricin B-type lectin domain occupies 428 to 555 (KEALPGIIKQ…DAQAQQWQLL (128 aa)).

The protein belongs to the glycosyltransferase 2 family. GalNAc-T subfamily. Mn(2+) serves as cofactor.

Its subcellular location is the golgi apparatus membrane. The enzyme catalyses L-seryl-[protein] + UDP-N-acetyl-alpha-D-galactosamine = a 3-O-[N-acetyl-alpha-D-galactosaminyl]-L-seryl-[protein] + UDP + H(+). The catalysed reaction is L-threonyl-[protein] + UDP-N-acetyl-alpha-D-galactosamine = a 3-O-[N-acetyl-alpha-D-galactosaminyl]-L-threonyl-[protein] + UDP + H(+). The protein operates within protein modification; protein glycosylation. Functionally, catalyzes the initial reaction in O-linked oligosaccharide biosynthesis, the transfer of an N-acetyl-D-galactosamine residue to a serine or threonine residue on the protein receptor. This is Polypeptide N-acetylgalactosaminyltransferase 16 (GALNT16) from Homo sapiens (Human).